A 284-amino-acid chain; its full sequence is 4-hydroxy-3-methylbut-2-enyl diphosphate reductase (284 aa).

Cysteine 12 contributes to the [4Fe-4S] cluster binding site. (2E)-4-hydroxy-3-methylbut-2-enyl diphosphate-binding residues include histidine 40 and histidine 72. 2 residues coordinate dimethylallyl diphosphate: histidine 40 and histidine 72. Positions 40 and 72 each coordinate isopentenyl diphosphate. Cysteine 94 contacts [4Fe-4S] cluster. Histidine 122 provides a ligand contact to (2E)-4-hydroxy-3-methylbut-2-enyl diphosphate. Histidine 122 serves as a coordination point for dimethylallyl diphosphate. Histidine 122 provides a ligand contact to isopentenyl diphosphate. The Proton donor role is filled by glutamate 124. Residue threonine 161 participates in (2E)-4-hydroxy-3-methylbut-2-enyl diphosphate binding. Cysteine 193 provides a ligand contact to [4Fe-4S] cluster. 3 residues coordinate (2E)-4-hydroxy-3-methylbut-2-enyl diphosphate: serine 221, asparagine 223, and serine 264. Serine 221, asparagine 223, and serine 264 together coordinate dimethylallyl diphosphate. Residues serine 221, asparagine 223, and serine 264 each coordinate isopentenyl diphosphate.

It belongs to the IspH family. The cofactor is [4Fe-4S] cluster.

The enzyme catalyses isopentenyl diphosphate + 2 oxidized [2Fe-2S]-[ferredoxin] + H2O = (2E)-4-hydroxy-3-methylbut-2-enyl diphosphate + 2 reduced [2Fe-2S]-[ferredoxin] + 2 H(+). It carries out the reaction dimethylallyl diphosphate + 2 oxidized [2Fe-2S]-[ferredoxin] + H2O = (2E)-4-hydroxy-3-methylbut-2-enyl diphosphate + 2 reduced [2Fe-2S]-[ferredoxin] + 2 H(+). It functions in the pathway isoprenoid biosynthesis; dimethylallyl diphosphate biosynthesis; dimethylallyl diphosphate from (2E)-4-hydroxy-3-methylbutenyl diphosphate: step 1/1. The protein operates within isoprenoid biosynthesis; isopentenyl diphosphate biosynthesis via DXP pathway; isopentenyl diphosphate from 1-deoxy-D-xylulose 5-phosphate: step 6/6. Functionally, catalyzes the conversion of 1-hydroxy-2-methyl-2-(E)-butenyl 4-diphosphate (HMBPP) into a mixture of isopentenyl diphosphate (IPP) and dimethylallyl diphosphate (DMAPP). Acts in the terminal step of the DOXP/MEP pathway for isoprenoid precursor biosynthesis. The polypeptide is 4-hydroxy-3-methylbut-2-enyl diphosphate reductase (Dehalococcoides mccartyi (strain CBDB1)).